A 481-amino-acid polypeptide reads, in one-letter code: CASP8 and FADD-like apoptosis regulator (481 aa).

2 DED domains span residues 6–78 (VSAE…RILK) and 97–172 (DYRV…LNTK). An interaction with CASP8 region spans residues 6–200 (VSAEVIHQVE…QASLPKLSIK (195 aa)). The interval 6 to 229 (VSAEVIHQVE…DSQRTLVKTS (224 aa)) is interaction with FADD. The interval 6 to 307 (VSAEVIHQVE…YASMAQHQDY (302 aa)) is interaction with CASP8 propeptide. The segment at 197–436 (LSIKYNSRLQ…KLSQQLKQGR (240 aa)) is interaction with CASP3. The interval 197–481 (LSIKYNSRLQ…LRKKLILAPT (285 aa)) is interaction with TRAF1 and TRAF2. The segment at 219–481 (RDSQRTLVKT…LRKKLILAPT (263 aa)) is interaction with CASP8 subunits p18 and p10. Positions 265–360 (DTKYLQETFT…RGKPKLFFIQ (96 aa)) are caspase. Residues 372–481 (SSLEVDGPSI…LRKKLILAPT (110 aa)) form an interaction with CASP8 region.

The protein belongs to the peptidase C14A family. TNFRSF6 stimulation triggers recruitment to the death-inducing signaling complex (DISC) formed by TNFRSF6, FADD and CASP8. A proteolytic fragment (p43) stays associated with the DISC. Interacts with RIPK1. In terms of processing, proteolytically processed by CASP8 generating subunits p43 and p12. In terms of tissue distribution, highly expressed in heart.

Its function is as follows. Apoptosis regulator protein which may function as a crucial link between cell survival and cell death pathways in mammalian cells. Acts as an inhibitor of TNFRSF6 mediated apoptosis. A proteolytic fragment (p43) is likely retained in the death-inducing signaling complex (DISC) thereby blocking further recruitment and processing of caspase-8 at the complex. Full length and shorter isoforms have been shown either to induce apoptosis or to reduce TNFRSF-triggered apoptosis. Lacks enzymatic (caspase) activity. The chain is CASP8 and FADD-like apoptosis regulator (Cflar) from Mus musculus (Mouse).